Consider the following 454-residue polypeptide: tRNA modification GTPase MnmE (454 aa).

(6S)-5-formyl-5,6,7,8-tetrahydrofolate-binding residues include Arg23, Glu80, and Lys120. The TrmE-type G domain maps to 216–377 (GMKVVIAGRP…LRNHLKQSMG (162 aa)). Asn226 contacts K(+). Residues 226-231 (NAGKSS), 245-251 (TDIAGTT), 270-273 (DTAG), 335-338 (NKAD), and 358-360 (SAR) each bind GTP. Residue Ser230 coordinates Mg(2+). 3 residues coordinate K(+): Thr245, Ile247, and Thr250. Residue Thr251 participates in Mg(2+) binding. Lys454 lines the (6S)-5-formyl-5,6,7,8-tetrahydrofolate pocket.

This sequence belongs to the TRAFAC class TrmE-Era-EngA-EngB-Septin-like GTPase superfamily. TrmE GTPase family. Homodimer. Heterotetramer of two MnmE and two MnmG subunits. Requires K(+) as cofactor.

Its subcellular location is the cytoplasm. Exhibits a very high intrinsic GTPase hydrolysis rate. Involved in the addition of a carboxymethylaminomethyl (cmnm) group at the wobble position (U34) of certain tRNAs, forming tRNA-cmnm(5)s(2)U34. This is tRNA modification GTPase MnmE from Shigella boydii serotype 18 (strain CDC 3083-94 / BS512).